Here is a 373-residue protein sequence, read N- to C-terminus: Geraniol dehydrogenase (373 aa).

7 residues coordinate Zn(2+): cysteine 47, histidine 67, cysteine 96, cysteine 99, cysteine 102, cysteine 110, and cysteine 175.

Belongs to the zinc-containing alcohol dehydrogenase family. As to quaternary structure, homodimer. Zn(2+) serves as cofactor.

It carries out the reaction (2E)-geraniol + NAD(+) = (2E)-geranial + NADH + H(+). It catalyses the reaction perillyl alcohol + NAD(+) = perillyl aldehyde + NADH + H(+). It participates in terpene metabolism; monoterpene degradation. Is inhibited by EDTA, N-ethylmaleimide, diethylpyrocarbonate, and 1-cyclohexyl-N-(2-morpholinoethyl)carbodiimide in vitro. Involved in the degradation of the monoterpenes beta-myrcene and limonene. During anaerobic degradation of beta-myrcene, catalyzes the NAD(+)-dependent oxidation of geraniol to geranial. Can also catalyze the oxidation of (S)-perillyl alcohol to perillyl aldehyde, and to a lesser extent, the oxidation of nerol, citronellol, cumic alcohol, and benzyl alcohol. Cannot use NADP(+) instead of NAD(+) as cosubstrate. The sequence is that of Geraniol dehydrogenase from Castellaniella defragrans (strain DSM 12143 / CCUG 39792 / 65Phen) (Alcaligenes defragrans).